The following is a 465-amino-acid chain: A-type ATP synthase subunit B (465 aa).

It belongs to the ATPase alpha/beta chains family. Has multiple subunits with at least A(3), B(3), C, D, E, F, H, I and proteolipid K(x).

Its subcellular location is the cell membrane. In terms of biological role, component of the A-type ATP synthase that produces ATP from ADP in the presence of a proton gradient across the membrane. The B chain is a regulatory subunit. The sequence is that of A-type ATP synthase subunit B from Pyrococcus horikoshii (strain ATCC 700860 / DSM 12428 / JCM 9974 / NBRC 100139 / OT-3).